The chain runs to 383 residues: Ceramide synthase 3 (383 aa).

A helical transmembrane segment spans residues 32 to 52 (VFVKPSHLYVTIPYAFLLLII). The tract at residues 66-127 (KSFGIKETVR…RSRRNQERPS (62 aa)) is homeobox-like. Positions 130–331 (KKFQEACWRF…ILKMLNRCIF (202 aa)) constitute a TLC domain. Helical transmembrane passes span 139–159 (FAFY…KPWL), 174–194 (LLPS…SLLF), 205–225 (FLAH…SWCA), 264–284 (FFIF…FWIL), and 298–318 (FFSY…HLYW). The Cytoplasmic portion of the chain corresponds to 319 to 383 (GYYILKMLNR…HLIPNGQHGH (65 aa)). Serine 340 is modified (phosphoserine). The segment covering 342 to 355 (DEDYEEEEEEEEEE) has biased composition (acidic residues). Positions 342 to 363 (DEDYEEEEEEEEEEATKGKEMD) are disordered.

In terms of tissue distribution, expressed in the epidermis, where it localizes at the interface between the stratum granulosum and the stratum corneum (at protein level).

Its subcellular location is the endoplasmic reticulum membrane. It carries out the reaction a very long-chain fatty acyl-CoA + a sphingoid base = an N-(very-long-chain fatty acyl)-sphingoid base + CoA + H(+). The enzyme catalyses docosanoyl-CoA + sphinganine = N-docosanoylsphinganine + CoA + H(+). It catalyses the reaction tetracosanoyl-CoA + sphinganine = N-tetracosanoylsphinganine + CoA + H(+). The catalysed reaction is hexacosanoyl-CoA + sphinganine = N-hexacosanoylsphinganine + CoA + H(+). It carries out the reaction 2-hydroxydocosanoyl-CoA + sphinganine = N-(2-hydroxydocosanoyl)-sphinganine + CoA + H(+). The enzyme catalyses 2-hydroxytetracosanoyl-CoA + sphinganine = N-(2-hydroxytetracosanoyl)-sphinganine + CoA + H(+). It catalyses the reaction an ultra-long-chain fatty acyl-CoA + a sphingoid base = an N-(ultra-long-chain-acyl)-sphingoid base + CoA + H(+). The catalysed reaction is octacosanoyl-CoA + sphinganine = N-(octacosanoyl)-sphinganine + CoA + H(+). It carries out the reaction a fatty acyl-CoA + sphing-4-enine = an N-acylsphing-4-enine + CoA + H(+). The enzyme catalyses sphinganine + octadecanoyl-CoA = N-(octadecanoyl)-sphinganine + CoA + H(+). It catalyses the reaction 2-hydroxyoctadecanoyl-CoA + sphinganine = N-(2-hydroxyoctadecanoyl)-sphinganine + CoA + H(+). It participates in lipid metabolism; sphingolipid metabolism. In terms of biological role, ceramide synthase that catalyzes the transfer of the acyl chain from acyl-CoA to a sphingoid base, with high selectivity toward very- and ultra-long-chain fatty acyl-CoA (chain length greater than C22). N-acylates sphinganine and sphingosine bases to form dihydroceramides and ceramides in de novo synthesis and salvage pathways, respectively. It is crucial for the synthesis of ultra-long-chain ceramides in the epidermis, to maintain epidermal lipid homeostasis and terminal differentiation. The polypeptide is Ceramide synthase 3 (Homo sapiens (Human)).